The chain runs to 141 residues: Hemoglobin subunit alpha-2 (141 aa).

One can recognise a Globin domain in the interval 1-141; that stretch reads VLSPADKNNV…VSTVLTSKYR (141 aa). H58 serves as a coordination point for O2. Residue H87 participates in heme b binding.

Belongs to the globin family. In terms of assembly, heterotetramer of two alpha chains and two beta chains. In terms of tissue distribution, red blood cells.

Its function is as follows. Involved in oxygen transport from the lung to the various peripheral tissues. The polypeptide is Hemoglobin subunit alpha-2 (Varecia variegata (Black-and-white ruffed lemur)).